Consider the following 358-residue polypeptide: MRKINFSAGPSTLPLEILEQAQKELCDYQGRGYSIMEISHRTKVFEEVHFGAQEKAKKLYELNDDYEVLFLQGGASLQFAMIPMNLALNGVCEYANTGVWTKKAIKEAQILGVNVKTVASSEESNFDHIPRVEFSDNADYAYICSNNTIYGTQYQNYPKTKTPLIVDASSDFFSRKVDFSNIALFYGGVQKNAGISGLSCIFIRKDMLERSKNKQIPSMLNYLTHAENQSLFNTPPTFAIYMFNLEMDWLLNQGGLDKVHEKNSQKATMLYECIDLSNGFYKGHADKKDRSLMNVSFNIAKNKDLEPLFVKEAEEAGMIGLKGHRILGGIRASIYNALNLDQVKTLCEFMKEFQGKYA.

R41 contacts L-glutamate. Pyridoxal 5'-phosphate contacts are provided by residues 75 to 76 (AS), W100, T148, D167, and Q190. K191 bears the N6-(pyridoxal phosphate)lysine mark. 233 to 234 (NT) serves as a coordination point for pyridoxal 5'-phosphate.

The protein belongs to the class-V pyridoxal-phosphate-dependent aminotransferase family. SerC subfamily. As to quaternary structure, homodimer. Requires pyridoxal 5'-phosphate as cofactor.

The protein resides in the cytoplasm. The catalysed reaction is O-phospho-L-serine + 2-oxoglutarate = 3-phosphooxypyruvate + L-glutamate. It catalyses the reaction 4-(phosphooxy)-L-threonine + 2-oxoglutarate = (R)-3-hydroxy-2-oxo-4-phosphooxybutanoate + L-glutamate. The protein operates within amino-acid biosynthesis; L-serine biosynthesis; L-serine from 3-phospho-D-glycerate: step 2/3. It functions in the pathway cofactor biosynthesis; pyridoxine 5'-phosphate biosynthesis; pyridoxine 5'-phosphate from D-erythrose 4-phosphate: step 3/5. Its function is as follows. Catalyzes the reversible conversion of 3-phosphohydroxypyruvate to phosphoserine and of 3-hydroxy-2-oxo-4-phosphonooxybutanoate to phosphohydroxythreonine. In Campylobacter jejuni subsp. jejuni serotype O:2 (strain ATCC 700819 / NCTC 11168), this protein is Phosphoserine aminotransferase.